The following is a 346-amino-acid chain: Calcium homeostasis modulator protein 1 (346 aa).

Residues 1–21 (MMDKFRMIFQFLQSNQESFMN) are Cytoplasmic-facing. Positions 10–37 (QFLQSNQESFMNGICGIMALASAQMYSA) are central pore. The helical transmembrane segment at 22–37 (GICGIMALASAQMYSA) threads the bilayer. Topologically, residues 38–49 (FDFNCPCLPGYN) are extracellular. 2 cysteine pairs are disulfide-bonded: Cys-42–Cys-127 and Cys-44–Cys-161. Residues 50–72 (AAYSAGILLAPPLVLFLLGLVMN) traverse the membrane as a helical segment. The interval 63 to 70 (VLFLLGLV) is phospholipid-binding. Over 73-99 (NNVSMLAEEWKRPLGRRAKDPAVLRYM) the chain is Cytoplasmic. A helical membrane pass occupies residues 100–125 (FCSMAQRALIAPVVWVAVTLLDGKCF). Residue Cys-101 is the site of S-palmitoyl cysteine attachment. Residues 105 to 117 (QRALIAPVVWVAV) are phospholipid-binding. The Extracellular segment spans residues 126–180 (LCAFCTAVPVSALGNGSLAPGLPAPELARLLARVPCPEIYDGDWLLAREVAVRYL). Asn-140 carries an N-linked (GlcNAc...) asparagine glycan. A helical transmembrane segment spans residues 181 to 206 (RCISQALGWSFVLLTTLLAFVVRSVR). Residues 192 to 202 (VLLTTLLAFVV) form a phospholipid-binding region. At 207 to 346 (PCFTQAAFLK…KEVATYFSKV (140 aa)) the chain is on the cytoplasmic side. Cys-208 carries S-palmitoyl cysteine lipidation. The tract at residues 313-346 (LRLGQEEPPLMGNGWAGGGPRPPRKEVATYFSKV) is disordered.

The protein belongs to the CALHM family. Oligomerizes to form hexamers and octamers. Does not form gap junctions. Associates with CALHM3 as a pore-forming subunit in a hetero-hexameric channel complex. N-glycosylated. Assembly with CALHM3 is associated with N-glycan remodeling and formation of hybrid complex- and high mannose-type glycochains. This N-glycan processing regulates channel trafficking and gating kinetics. In terms of processing, palmitoylated by ZDHHC3, ZDHHC20 and possibly ZDHHC7. Palmitoylation regulates voltage-dependent gating of the channel by shifting it toward more depolarized potentials. Predominantly expressed in adult brain. Detected also in retinoic acid-differentiated SH-SY5Y cells. Specifically expressed in circumvallate taste bud cells.

The protein resides in the cell membrane. It is found in the endoplasmic reticulum membrane. Its subcellular location is the basolateral cell membrane. It carries out the reaction ATP(in) = ATP(out). It catalyses the reaction Ca(2+)(in) = Ca(2+)(out). The catalysed reaction is Mg(2+)(in) = Mg(2+)(out). The enzyme catalyses Na(+)(in) = Na(+)(out). It carries out the reaction K(+)(in) = K(+)(out). It catalyses the reaction Li(+)(in) = Li(+)(out). The catalysed reaction is Rb(+)(in) = Rb(+)(out). The enzyme catalyses Cs(+)(in) = Cs(+)(out). It carries out the reaction chloride(in) = chloride(out). Regulated by membrane voltage and extracellular Ca(2+). Inhibited by Gd(3+), ruthenium red, and Zn(2+) and partially inhibited by 2-aminoethoxydiphenyl borate. In terms of biological role, pore-forming subunit of gustatory voltage-gated ion channels required for sensory perception of sweet, bitter and umami tastes. With CALHM3 forms a fast-activating voltage-gated ATP-release channel in type II taste bud cells, ATP acting as a neurotransmitter to activate afferent neural gustatory pathways. Acts both as a voltage-gated and calcium-activated ion channel: mediates neuronal excitability in response to membrane depolarization and low extracellular Ca(2+) concentration. Has poor ion selectivity and forms a wide pore (around 14 Angstroms) that mediates permeation of small ions including Ca(2+), Na(+), K(+) and Cl(-), as well as larger ions such as ATP(4-). Mediates Ca(2+) influx and downstream activation of the ERK1 and ERK2 cascade in neurons. Triggers endoplasmic reticulum stress by reducing the Ca(2+) content of the endoplasmic reticulum. May indirectly control amyloid precursor protein (APP) proteolysis and aggregated amyloid-beta (Abeta) peptides levels in a Ca(2+)-dependent manner. This chain is Calcium homeostasis modulator protein 1, found in Homo sapiens (Human).